We begin with the raw amino-acid sequence, 317 residues long: Gamma-glutamyl hydrolase (317 aa).

Positions 1 to 24 (MANLGYLLCLLGLLLCGLSSPGMS) are cleaved as a signal peptide. In terms of domain architecture, Gamma-glutamyl hydrolase spans 25-317 (RPYNHGSERP…SSFQQAYMFD (293 aa)). Residue Asn100 is glycosylated (N-linked (GlcNAc...) (high mannose) asparagine). Catalysis depends on Cys133, which acts as the Nucleophile. Asn162 and Asn188 each carry an N-linked (GlcNAc...) (high mannose) asparagine glycan. Asn202 carries N-linked (GlcNAc...) asparagine glycosylation. Catalysis depends on His243, which acts as the Proton donor. An N-linked (GlcNAc...) asparagine glycan is attached at Asn306.

This sequence belongs to the peptidase C26 family. As to quaternary structure, homodimer. As to expression, isoform I (more expressed than isoform II in all tissues) is highly expressed in salivary gland, followed by kidney, liver, lung, stomach and uterus, and weakly expressed in small intestine, brain and fetal liver. Also expressed at a lower level in thymus, spleen and skeletal muscle. Also expressed in tumors.

It is found in the secreted. It localises to the extracellular space. The protein localises to the lysosome. Its subcellular location is the melanosome. The enzyme catalyses (6S)-5,6,7,8-tetrahydrofolyl-(gamma-L-Glu)(n) + (n-1) H2O = (6S)-5,6,7,8-tetrahydrofolate + (n-1) L-glutamate. Its function is as follows. Hydrolyzes the polyglutamate sidechains of pteroylpolyglutamates. Progressively removes gamma-glutamyl residues from pteroylpoly-gamma-glutamate to yield pteroyl-alpha-glutamate (folic acid) and free glutamate. May play an important role in the bioavailability of dietary pteroylpolyglutamates and in the metabolism of pteroylpolyglutamates and antifolates. The protein is Gamma-glutamyl hydrolase (Ggh) of Mus musculus (Mouse).